A 534-amino-acid polypeptide reads, in one-letter code: MSEVSNEAARRRTFAIISHPDAGKTTLTEKLLLFGGAIQMAGSVKGRKAARHATSDWMALEKERGISVTSSVMQFPYEGKIVNLLDTPGHADFGEDTYRVLTAVDSALMVIDVAKGVEERTIKLMEVCRLRDTPIMTFINKLDREGKNPIDLLDEVETVLGIQCAPVTWPIGMGQRLKGVVHLISGEVHLYEQGRNFTRQDSTIFPSLDAPGLVEKIGEQMLAELREELELVQGASNPFDLDAYRAGQQTPVFFGSGVNNFGVQPLLDFFVEHAPPPQTRETTGRRVEPTEAKLSGFVFKIQANMDPQHRDRVAFMRVCSGKFTAGMKTLHVRSGKDVKLANALTFMASDREIAAEAWPGDVIGIHNHGTISIGDTFTEGESLSFTGIPNFAPELFRRARLRDPLKLKQLQKGLAQLSEEGATQFFRPLMSNDLILGAVGVLQFDVVAYRLKDEYGVDAIFEPVSVTTARWVHCDNPKKLEEFREKNAGNLGIDAAGELVYLAPTRVNLQLAQERAPDVRFSATREHAHVKAVD.

Residues 9–278 (ARRRTFAIIS…FFVEHAPPPQ (270 aa)) enclose the tr-type G domain. GTP is bound by residues 18–25 (SHPDAGKT), 86–90 (DTPGH), and 140–143 (NKLD).

This sequence belongs to the TRAFAC class translation factor GTPase superfamily. Classic translation factor GTPase family. PrfC subfamily.

The protein resides in the cytoplasm. Increases the formation of ribosomal termination complexes and stimulates activities of RF-1 and RF-2. It binds guanine nucleotides and has strong preference for UGA stop codons. It may interact directly with the ribosome. The stimulation of RF-1 and RF-2 is significantly reduced by GTP and GDP, but not by GMP. The protein is Peptide chain release factor 3 of Xanthomonas axonopodis pv. citri (strain 306).